Reading from the N-terminus, the 145-residue chain is Ribosome maturation factor RimP (145 aa).

Belongs to the RimP family.

The protein localises to the cytoplasm. Functionally, required for maturation of 30S ribosomal subunits. The sequence is that of Ribosome maturation factor RimP from Borreliella burgdorferi (strain ATCC 35210 / DSM 4680 / CIP 102532 / B31) (Borrelia burgdorferi).